The chain runs to 259 residues: Small ribosomal subunit protein eS1 (259 aa).

Residue A2 is modified to N-acetylalanine; partial.

It belongs to the eukaryotic ribosomal protein eS1 family. Component of the small ribosomal subunit. Mature ribosomes consist of a small (40S) and a large (60S) subunit. The 40S subunit contains about 33 different proteins and 1 molecule of RNA (18S). The 60S subunit contains about 49 different proteins and 3 molecules of RNA (25S, 5.8S and 5S).

It is found in the cytoplasm. This Cryptococcus neoformans var. neoformans serotype D (strain B-3501A) (Filobasidiella neoformans) protein is Small ribosomal subunit protein eS1.